Consider the following 221-residue polypeptide: Max dimerization protein 1 (221 aa).

Residues 21 to 49 carry the Nuclear localization signal motif; the sequence is RREREAEHGYASMLPYNNKDRDALKRRNK. Disordered regions lie at residues 30 to 68 and 173 to 204; these read YASM…EKNR and TGDL…YSST. The region spanning 56-108 is the bHLH domain; the sequence is SSRSTHNEMEKNRRAHLRLCLEKLKGLVPLGPESSRHTTLSLLTKAKLHIKKL. Residues 175-184 show a composition bias toward low complexity; the sequence is DLDWSSSSVS. Residues 191–204 are compositionally biased toward polar residues; the sequence is SMQSLGSDEGYSST.

As to quaternary structure, heterodimer with MAX; the interaction is required for DNA-binding. DNA binding requires dimerization with another bHLH protein; does not form homodimers, and does not bind to DNA in the absence of MAX in vitro. Interacts with RNF17. In terms of processing, ubiquitinated by BIRC2/c-IAP1, leading to its subsequent degradation by the proteasome.

The protein localises to the nucleus. In terms of biological role, component of a transcriptional repressor complex together with MAX. In complex with MAX binds to the core DNA sequence 5'-CAC[GA]TG-3'. Antagonizes MYC transcriptional activity by competing with MYC for MAX binding. Binds to the TERT promoter and represses telomerase expression, possibly by interfering with MYC binding. This Homo sapiens (Human) protein is Max dimerization protein 1 (MXD1).